Reading from the N-terminus, the 93-residue chain is Large ribosomal subunit protein uL23cz/uL23cy (93 aa).

This sequence belongs to the universal ribosomal protein uL23 family. Part of the 50S ribosomal subunit.

Its subcellular location is the plastid. It localises to the chloroplast. Functionally, binds to 23S rRNA. This chain is Large ribosomal subunit protein uL23cz/uL23cy (rpl23-A), found in Oryza nivara (Indian wild rice).